Consider the following 243-residue polypeptide: Probable phosphatase CBO3379/CLC_3322 (243 aa).

The Zn(2+) site is built by H8, H10, H16, H41, E74, H102, H132, D192, and H194.

It belongs to the PHP family. The cofactor is Zn(2+).

The protein is Probable phosphatase CBO3379/CLC_3322 of Clostridium botulinum (strain Hall / ATCC 3502 / NCTC 13319 / Type A).